The following is a 353-amino-acid chain: Very-long-chain 3-oxoacyl-CoA reductase (353 aa).

The helical transmembrane segment at 33 to 53 threads the bilayer; that stretch reads AAWALIAAGGFFVISRALLFG. The NADP(+) site is built by Val-78, Asp-133, Asp-141, Asn-160, Tyr-227, Lys-231, Ile-260, and Ser-262. The active-site Proton donor is Tyr-227. Residue Lys-231 is the Lowers pKa of active site Tyr of the active site.

The protein belongs to the short-chain dehydrogenases/reductases (SDR) family.

It localises to the endoplasmic reticulum membrane. The catalysed reaction is a very-long-chain (3R)-3-hydroxyacyl-CoA + NADP(+) = a very-long-chain 3-oxoacyl-CoA + NADPH + H(+). The protein operates within lipid metabolism; fatty acid biosynthesis. In terms of biological role, component of the microsomal membrane bound fatty acid elongation system, which produces the 26-carbon very long-chain fatty acids (VLCFA) from palmitate. Catalyzes the reduction of the 3-ketoacyl-CoA intermediate that is formed in each cycle of fatty acid elongation. VLCFAs serve as precursors for ceramide and sphingolipids. This is Very-long-chain 3-oxoacyl-CoA reductase from Aspergillus terreus (strain NIH 2624 / FGSC A1156).